The sequence spans 462 residues: GTPase Der (462 aa).

EngA-type G domains lie at 3-166 (PVIA…ITEM) and 175-348 (IKIA…HSAI). GTP-binding positions include 9 to 16 (GRPNVGKS), 56 to 60 (DTGGI), 118 to 121 (NKTD), 181 to 188 (GRPNVGKS), 228 to 232 (DTAGV), and 293 to 296 (NKWD). One can recognise a KH-like domain in the interval 349-433 (QSFSTPKLTR…PLKIEFKGGQ (85 aa)).

The protein belongs to the TRAFAC class TrmE-Era-EngA-EngB-Septin-like GTPase superfamily. EngA (Der) GTPase family. As to quaternary structure, associates with the 50S ribosomal subunit.

Functionally, GTPase that plays an essential role in the late steps of ribosome biogenesis. This Legionella pneumophila (strain Lens) protein is GTPase Der.